A 364-amino-acid chain; its full sequence is Dihydroorotate dehydrogenase (quinone) (364 aa).

FMN is bound by residues 61–65 (AGYDK) and Thr85. Residue Lys65 participates in substrate binding. A substrate-binding site is contributed by 110 to 114 (NRLGF). FMN is bound by residues Asn139 and Asn170. Asn170 provides a ligand contact to substrate. Residue Ser173 is the Nucleophile of the active site. Substrate is bound at residue Asn175. Lys215 and Ser243 together coordinate FMN. Residue 244–245 (NT) coordinates substrate. Residues Gly266, Gly295, and 316–317 (YT) contribute to the FMN site.

The protein belongs to the dihydroorotate dehydrogenase family. Type 2 subfamily. As to quaternary structure, monomer. The cofactor is FMN.

The protein localises to the cell membrane. The catalysed reaction is (S)-dihydroorotate + a quinone = orotate + a quinol. It functions in the pathway pyrimidine metabolism; UMP biosynthesis via de novo pathway; orotate from (S)-dihydroorotate (quinone route): step 1/1. Catalyzes the conversion of dihydroorotate to orotate with quinone as electron acceptor. This chain is Dihydroorotate dehydrogenase (quinone), found in Brucella anthropi (strain ATCC 49188 / DSM 6882 / CCUG 24695 / JCM 21032 / LMG 3331 / NBRC 15819 / NCTC 12168 / Alc 37) (Ochrobactrum anthropi).